The following is a 28-amino-acid chain: U15-ctenitoxin-Co1a (28 aa).

Intrachain disulfides connect cysteine 3–cysteine 17 and cysteine 10–cysteine 22.

In terms of tissue distribution, expressed by the venom gland.

The protein localises to the secreted. Insecticidal neurotoxin that reversibly inhibits the N-methyl-D-aspartate (NMDA)-subtype of ionotropic glutamate receptor (GRIN) and inhibits inactivation of insect sodium channels (Nav). In vivo, is highly toxic to insects. The polypeptide is U15-ctenitoxin-Co1a (Ctenus ornatus (Brazilian spider)).